Reading from the N-terminus, the 390-residue chain is Mevalonate kinase (390 aa).

ATP is bound by residues Lys16, Ser130, and 135-141; that span reads GAGLGSS. Ser141 and Glu193 together coordinate Mg(2+). Asp204 serves as the catalytic Proton acceptor.

The protein belongs to the GHMP kinase family. Mevalonate kinase subfamily. The cofactor is Mg(2+).

The protein localises to the cytoplasm. It carries out the reaction (R)-mevalonate + ATP = (R)-5-phosphomevalonate + ADP + H(+). Its pathway is isoprenoid biosynthesis; isopentenyl diphosphate biosynthesis via mevalonate pathway; isopentenyl diphosphate from (R)-mevalonate: step 1/3. In terms of biological role, catalyzes the phosphorylation of mevalonate to mevalonate 5-phosphate, a key step in isoprenoid biosynthesis. This is Mevalonate kinase from Dictyostelium discoideum (Social amoeba).